A 115-amino-acid polypeptide reads, in one-letter code: MAGFGLPNFGQLTEAFKKAQQIQQNAQKLQEELEVMEIEGTNDDNRAKIWMSGNQKPLRVEIDPSLLSEGKAIIEEAILEAMKSAHEVSTSTMKERMEDLTGGFKLNLPGMGEES.

Positions 89-115 (STSTMKERMEDLTGGFKLNLPGMGEES) are disordered.

This sequence belongs to the YbaB/EbfC family. In terms of assembly, homodimer.

The protein localises to the cytoplasm. The protein resides in the nucleoid. In terms of biological role, binds to DNA and alters its conformation. May be involved in regulation of gene expression, nucleoid organization and DNA protection. This is Nucleoid-associated protein NATL1_00191 from Prochlorococcus marinus (strain NATL1A).